Here is a 443-residue protein sequence, read N- to C-terminus: Threonine/serine transporter TdcC (443 aa).

11 helical membrane-spanning segments follow: residues 22–42 (TTWTLGLFGTAIGAGVLFFPI), 44–64 (AGFGGLIPILLMLVLAYPIAF), 97–117 (GVVITFLYFFAICPLLWIYGV), 140–160 (VVALFLLLLMAFVIWFGKDLM), 163–183 (VMSYLVWPFIASLVLISLSLI), 207–227 (ILVTVWLGISIMVFSFNFSPI), 259–279 (ASMLMVAVVMFFAFSCLFTLS), 319–339 (ASIIALVAIFKSFFGHYLGTL), 366–386 (ISMIFIMGSTWIVAYANPNIL), 389–409 (IEAMGAPIIASLLCLLPMYAI), and 423–443 (DNVFVTLIGLLTILNIVYKLF).

Belongs to the amino acid/polyamine transporter 2 family. SdaC/TdcC subfamily.

The protein localises to the cell inner membrane. It catalyses the reaction L-threonine(in) + H(+)(in) = L-threonine(out) + H(+)(out). It carries out the reaction L-serine(in) + H(+)(in) = L-serine(out) + H(+)(out). Involved in the import of threonine and serine into the cell, with the concomitant import of a proton (symport system). This Salmonella arizonae (strain ATCC BAA-731 / CDC346-86 / RSK2980) protein is Threonine/serine transporter TdcC.